Reading from the N-terminus, the 364-residue chain is Gap junction delta-4 protein (364 aa).

Topologically, residues methionine 1–threonine 19 are cytoplasmic. A helical membrane pass occupies residues isoleucine 20–alanine 40. Residues glycine 41–arginine 76 lie on the Extracellular side of the membrane. A helical membrane pass occupies residues phenylalanine 77–leucine 97. The Cytoplasmic segment spans residues histidine 98 to arginine 128. Residues methionine 129 to alanine 149 form a helical membrane-spanning segment. Residues arginine 150–serine 173 lie on the Extracellular side of the membrane. The chain crosses the membrane as a helical span at residues leucine 174–leucine 194. At leucine 195–valine 364 the chain is on the cytoplasmic side. The segment covering histidine 331–lysine 340 has biased composition (polar residues). The segment at histidine 331–valine 364 is disordered.

The protein belongs to the connexin family. Delta-type subfamily. In terms of assembly, a connexon is composed of a hexamer of connexins.

Its subcellular location is the cell membrane. The protein localises to the cell junction. It is found in the gap junction. Functionally, one gap junction consists of a cluster of closely packed pairs of transmembrane channels, the connexons, through which materials of low MW diffuse from one cell to a neighboring cell. This chain is Gap junction delta-4 protein (Gjd4), found in Mus musculus (Mouse).